The sequence spans 269 residues: Signal recognition particle receptor subunit beta (269 aa).

The chain crosses the membrane as a helical span at residues 35 to 55; it reads LLSVAVALLAVLLTLVFWKFI. Residues 69 to 77 and 90 to 93 each bind GTP; these read GLCDSGKTL and TQTS. At serine 110 the chain carries Phosphoserine. GTP contacts are provided by residues glycine 118 and 178–181; that span reads NKQD. Threonine 212 bears the Phosphothreonine mark. Alanine 246 is a binding site for GTP.

This sequence belongs to the SRP receptor beta subunit family. In terms of assembly, heterodimer with SRPRA.

It localises to the endoplasmic reticulum membrane. In terms of biological role, component of the SRP (signal recognition particle) receptor. Ensures, in conjunction with the signal recognition particle, the correct targeting of the nascent secretory proteins to the endoplasmic reticulum membrane system. May mediate the membrane association of SR. This Mus musculus (Mouse) protein is Signal recognition particle receptor subunit beta (Srprb).